Here is a 1469-residue protein sequence, read N- to C-terminus: Regulation of nuclear pre-mRNA domain-containing protein 2 (1469 aa).

Ala-2 carries the post-translational modification N-acetylalanine. Ser-16 carries the phosphoserine modification. Residues 19 to 149 form the CID domain; that stretch reads SAGALESSLD…ALREALMDRA (131 aa). Disordered regions lie at residues 329–445 and 489–524; these read STLP…TAAP and TGVS…PSHN. Over residues 370 to 386 the composition is skewed to basic and acidic residues; it reads ESDKSATPEPVTDNRDV. Ser-374 is subject to Phosphoserine. Residue Thr-376 is modified to Phosphothreonine. A compositionally biased stretch (acidic residues) spans 387–396; it reads EDMELSDVED. Ser-392 carries the post-translational modification Phosphoserine. Positions 397–412 are enriched in basic and acidic residues; sequence DGSKIIVEDRKEKPVE. Over residues 419 to 430 the composition is skewed to polar residues; it reads GVPTKSTESVSK. Over residues 434 to 445 the composition is skewed to pro residues; the sequence is CAPPSVPTTAAP. Phosphoserine occurs at positions 492, 495, 498, and 504. Thr-536 is modified (phosphothreonine). Residues 572-594 form a disordered region; that stretch reads ASEVTSQSTTASPASTTGSAVKG. The segment covering 576-591 has biased composition (low complexity); sequence TSQSTTASPASTTGSA. Phosphoserine occurs at positions 583 and 612. Thr-617 bears the Phosphothreonine mark. Ser-633 carries the post-translational modification Phosphoserine. Residues 647 to 656 are compositionally biased toward polar residues; the sequence is SLGFTGTHNP. 7 disordered regions span residues 647-686, 716-867, 919-1013, 1033-1140, 1154-1183, 1204-1328, and 1368-1414; these read SLGF…TSPS, SSAP…AMMN, SENC…SGVE, KNAS…HGRE, SSFD…FKTT, FNST…PTPP, and GPGL…HRDA. 4 positions are modified to phosphoserine: Ser-682, Ser-684, Ser-735, and Ser-738. At Thr-742 the chain carries Phosphothreonine. Phosphoserine is present on Ser-749. Position 751 is a phosphothreonine (Thr-751). Polar residues predominate over residues 761 to 771; it reads PTSSSVDTMSL. Phosphoserine is present on residues Ser-777 and Ser-781. Residues 777–787 are compositionally biased toward low complexity; the sequence is SPGSSTPSSTR. The residue at position 782 (Thr-782) is a Phosphothreonine. Phosphoserine occurs at positions 788, 836, 845, 919, and 947. Residues 959 to 982 are compositionally biased toward polar residues; it reads PDSNHSGLSQSTAGHLTLPQTQYP. Residues Ser-984 and Ser-995 each carry the phosphoserine modification. Residues 1047 to 1073 show a composition bias toward polar residues; that stretch reads QTPNKGTSSDGVSLSNLTQPSLPTTDQ. A phosphoserine mark is found at Ser-1086 and Ser-1117. The segment covering 1159-1168 has biased composition (low complexity); the sequence is GPSSASELAS. Positions 1169–1178 are enriched in gly residues; the sequence is LGGGGSGGLT. Over residues 1272 to 1295 the composition is skewed to pro residues; the sequence is GPPPPPGEHSGVPFPPPPPPPPPG. At Arg-1375 the chain carries Asymmetric dimethylarginine. 2 stretches are compositionally biased toward low complexity: residues 1377-1390 and 1400-1409; these read SLSL…HLGP and TSSSGLPLSP. 2 positions are modified to asymmetric dimethylarginine: Arg-1432 and Arg-1438.

In terms of assembly, associates with the RNA polymerase II complex.

This is Regulation of nuclear pre-mRNA domain-containing protein 2 (Rprd2) from Mus musculus (Mouse).